The primary structure comprises 730 residues: Protein folded gastrulation (730 aa).

The first 21 residues, 1 to 21 (MSPPNCLLAVLALTVFIGANN), serve as a signal peptide directing secretion. N-linked (GlcNAc...) asparagine glycosylation is found at asparagine 51 and asparagine 193. Residues 197–211 (TPETSTSITPTSTTT) are compositionally biased toward low complexity. The disordered stretch occupies residues 197–222 (TPETSTSITPTSTTTFAVPSVPSGEA). Residues asparagine 252 and asparagine 289 are each glycosylated (N-linked (GlcNAc...) asparagine). Positions 361 to 385 (ELEEEVGEEEVTATDILPSEEDEYT) are enriched in acidic residues. Positions 361–424 (ELEEEVGEEE…SPHPPEEPEI (64 aa)) are disordered. The span at 386 to 415 (TETATTTGDTTVAEASMDTSTATSTSGQSS) shows a compositional bias: low complexity. Asparagine 459 carries N-linked (GlcNAc...) asparagine glycosylation. Disordered stretches follow at residues 474–526 (EDES…GGHK) and 545–583 (KGKQ…TTTT). Low complexity predominate over residues 478–491 (STTTATPEPSSSTP). The segment covering 504–513 (DNDNLMTNTI) has biased composition (polar residues). The segment covering 567-583 (TSALTSTSTEDATTTTT) has biased composition (low complexity). Residues asparagine 590 and asparagine 639 are each glycosylated (N-linked (GlcNAc...) asparagine). Low complexity predominate over residues 663-676 (SAASTESAGTAATT). Residues 663 to 683 (SAASTESAGTAATTPNSSSNP) are disordered. Asparagine 678 carries an N-linked (GlcNAc...) asparagine glycan.

In terms of processing, may be highly O-glycosylated in its Ser/Thr-rich C-terminal part. Expressed in the invagination primordia in a pattern that precisely precedes the pattern of constrictions.

Its subcellular location is the secreted. The protein resides in the extracellular space. It localises to the extracellular matrix. Functionally, coordinates cell shape changes during formation of the ventral furrow and invagination of the posterior midgut primordium, by inducing apical constriction of cells in spatially and temporally defined manners. Could function as a secreted signal to initiate apical constriction by acting as a ligand for an unidentified G protein-coupled receptor, which in turn activates the G protein alpha subunit encoded by concertina, in neighboring cells. Such an intracellular pathway would ultimately induce contraction of the apical actin-myosin network. In the ventral furrow, fog appears to ensure that all the cells initiate constriction within several minutes of each other. In the posterior midgut invagination, fog appears to direct the ordered progression of constriction initiations out from a central region and also to delimit the peripheral extent of this spreading. In Drosophila melanogaster (Fruit fly), this protein is Protein folded gastrulation (fog).